We begin with the raw amino-acid sequence, 243 residues long: Transmembrane protein 174 (243 aa).

Helical transmembrane passes span 40–60 (LLFSGIFLGLVGITFTVMGWI) and 73–93 (LLGPILLSVGVTFILISVCKF). The interval 205–229 (AGHDRPSSDADQLEGTQMGEEERVC) is disordered.

Interacts with SLC34A1; regulates SLC34A1 internalization by PTH and FGF23.

It localises to the endoplasmic reticulum membrane. The protein localises to the apical cell membrane. Functionally, regulator of plasma phosphate homeostasis. Decreases serum inorganic phosphate (Pi) uptake by regulating the sodium-phosphate cotransporter SLC34A1 trafficking by PTH and FGF23 in the kidney. In Rattus norvegicus (Rat), this protein is Transmembrane protein 174 (Tmem174).